The primary structure comprises 125 residues: SOSS complex subunit C homolog A (125 aa).

Positions 1 to 16 (MAFPNTSAQQAETNSK) are enriched in polar residues. 3 disordered regions span residues 1–20 (MAFPNTSAQQAETNSKSLEE), 38–74 (SNTNQMPAPQLLGQPSTTTATPDLVSTNSTPPRAAFN), and 105–125 (PATPSTTTPPITPIANANNPK).

It belongs to the SOSS-C family.

The polypeptide is SOSS complex subunit C homolog A (Drosophila willistoni (Fruit fly)).